Consider the following 508-residue polypeptide: Photosystem II CP47 reaction center protein (508 aa).

Transmembrane regions (helical) follow at residues 21 to 36 (AVHI…WAGS), 101 to 115 (IVFS…IWHW), 140 to 156 (GIHL…FGAF), 203 to 218 (IAAG…FHLS), 237 to 252 (VLSS…AFVV), and 457 to 472 (SFAL…HGAR).

It belongs to the PsbB/PsbC family. PsbB subfamily. In terms of assembly, PSII is composed of 1 copy each of membrane proteins PsbA, PsbB, PsbC, PsbD, PsbE, PsbF, PsbH, PsbI, PsbJ, PsbK, PsbL, PsbM, PsbT, PsbX, PsbY, PsbZ, Psb30/Ycf12, at least 3 peripheral proteins of the oxygen-evolving complex and a large number of cofactors. It forms dimeric complexes. It depends on Binds multiple chlorophylls. PSII binds additional chlorophylls, carotenoids and specific lipids. as a cofactor.

Its subcellular location is the plastid. It is found in the chloroplast thylakoid membrane. In terms of biological role, one of the components of the core complex of photosystem II (PSII). It binds chlorophyll and helps catalyze the primary light-induced photochemical processes of PSII. PSII is a light-driven water:plastoquinone oxidoreductase, using light energy to abstract electrons from H(2)O, generating O(2) and a proton gradient subsequently used for ATP formation. The polypeptide is Photosystem II CP47 reaction center protein (Trachelium caeruleum (Blue throatwort)).